The chain runs to 172 residues: 5'(3')-deoxyribonucleotidase (172 aa).

Aspartate 8 serves as the catalytic Nucleophile. 3 residues coordinate Mg(2+): aspartate 8, aspartate 10, and aspartate 132. The Proton donor role is filled by aspartate 10.

It belongs to the 5'(3')-deoxyribonucleotidase family. The cofactor is Mg(2+).

In terms of biological role, dephosphorylates nucleoside monophosphates such as the 5' and 2'(3')-phosphates of deoxyribonucleotides in vitro. Also catalyzes the dephosphorylation of coenzyme A (CoA), pyridoxal-5'-phosphate (PLP), riboflavine-5-phosphate (FMN) and nicotinamide adenine dinucleotide phosphate (NADP) in vitro. The protein is 5'(3')-deoxyribonucleotidase (yorS) of Bacillus subtilis (strain 168).